Reading from the N-terminus, the 462-residue chain is ATP synthase subunit beta 2 (462 aa).

Residue 151–158 (GGAGVGKT) coordinates ATP.

It belongs to the ATPase alpha/beta chains family. In terms of assembly, F-type ATPases have 2 components, CF(1) - the catalytic core - and CF(0) - the membrane proton channel. CF(1) has five subunits: alpha(3), beta(3), gamma(1), delta(1), epsilon(1). CF(0) has three main subunits: a(1), b(2) and c(9-12). The alpha and beta chains form an alternating ring which encloses part of the gamma chain. CF(1) is attached to CF(0) by a central stalk formed by the gamma and epsilon chains, while a peripheral stalk is formed by the delta and b chains.

It localises to the cell inner membrane. It catalyses the reaction ATP + H2O + 4 H(+)(in) = ADP + phosphate + 5 H(+)(out). Functionally, produces ATP from ADP in the presence of a proton gradient across the membrane. The catalytic sites are hosted primarily by the beta subunits. The chain is ATP synthase subunit beta 2 from Chlorobaculum tepidum (strain ATCC 49652 / DSM 12025 / NBRC 103806 / TLS) (Chlorobium tepidum).